Here is a 141-residue protein sequence, read N- to C-terminus: ATP synthase epsilon chain (141 aa).

It belongs to the ATPase epsilon chain family. As to quaternary structure, F-type ATPases have 2 components, CF(1) - the catalytic core - and CF(0) - the membrane proton channel. CF(1) has five subunits: alpha(3), beta(3), gamma(1), delta(1), epsilon(1). CF(0) has three main subunits: a, b and c.

It localises to the cell inner membrane. Its function is as follows. Produces ATP from ADP in the presence of a proton gradient across the membrane. The protein is ATP synthase epsilon chain of Chromohalobacter salexigens (strain ATCC BAA-138 / DSM 3043 / CIP 106854 / NCIMB 13768 / 1H11).